The primary structure comprises 466 residues: L-seryl-tRNA(Sec) selenium transferase (466 aa).

Lysine 294 is subject to N6-(pyridoxal phosphate)lysine.

Belongs to the SelA family. The cofactor is pyridoxal 5'-phosphate.

It localises to the cytoplasm. The enzyme catalyses L-seryl-tRNA(Sec) + selenophosphate + H(+) = L-selenocysteinyl-tRNA(Sec) + phosphate. It participates in aminoacyl-tRNA biosynthesis; selenocysteinyl-tRNA(Sec) biosynthesis; selenocysteinyl-tRNA(Sec) from L-seryl-tRNA(Sec) (bacterial route): step 1/1. Converts seryl-tRNA(Sec) to selenocysteinyl-tRNA(Sec) required for selenoprotein biosynthesis. This is L-seryl-tRNA(Sec) selenium transferase from Carboxydothermus hydrogenoformans (strain ATCC BAA-161 / DSM 6008 / Z-2901).